The primary structure comprises 1026 residues: MRLPWELLVLQSFMLCLADDYTLHGPVFVQEPSHVMFPLDSEEKKVKLSCEVKGNPKPHIRWKLNGTDVDIGMDFRYSVVEGSLLINNPNKTQDSGTYQCIATNSFGTIVSREAKLQFAYLENFKTRTRSTVSVRRGQGMVLLCGPPPHSGELSYAWIFNEHPSYQDNRRFVSQETGNLYIAKVEKADVGNYTCVVTNTVTSHQVLGPPTPLILRNDGVMGEYEPKIEVQFPETVPAEKGSTVKLECFALGNPVPTILWRRADGKPIARKARRHKSSGILEIPNFQQEDAGSYECVAENSRGKNIAKGQVTFYAQPNWVQIINDIHVAMEESVFWECKANGRPKPTYRWLKNGDPLLTRERIQIEQGTLNITIVNLSDAGMYQCVAENKHGVIYASAELSVIAESPDFSRTLLKRVTLVKVGGEVVIECKPKASPRPVYTWRKGREILRENERITISEDGNLRIINVTKSDAGSYTCIATNHFGTASSTGNVVVKDPTKVMVPPSSMDVTVGESIVLPCQVTHDHSLDIVFTWTFNGHLIDFDKDGDHFERVGGQDSAGDLMIRNIQLKHAGKYVCMVQTSVDKLSAAADLIVRGPPGPPEAVTIDEITDTTAQLSWRPGPDNHSPITMYVIQARTPFSVGWQAVSTVPELVDGKTFTATVVGLNPWVEYEFRTVAANVIGIGEPSRPSEKRRTEEALPEVTPANVSGGGGSKSELVITWETVPEELQNGRGFGYVVAFRPHGKMIWMLTVLASADASRYVFRNESVRPFSPFEVKVGVFNNKGEGPFSPTTLVYSAEEEPTKPPASIFARSLSATDIEVFWASPIGKNRGRIQGYEVKYWRHDDKEENARKIRTVGNQTSTKITNLKGNALYHLSVKAYNSAGTGPSSAAVNVTTRKPPPSQPPGNIIWNSSDSKIILNWDQVKALDNESEVKGYKVLYRWNRQSSTSVIETNKTSVELSLPFDEDYIIEIKPFSDGGDGSSSEQIRIPKISNSYARGSGASTSNACTLSAISTIMISLTARSSL.

Residues 1–18 (MRLPWELLVLQSFMLCLA) form the signal peptide. 6 Ig-like C2-type domains span residues 32–117 (PSHV…AKLQ), 122–206 (ENFK…HQVL), 225–311 (PKIE…GQVT), 316–400 (PNWV…AELS), 406–493 (PDFS…GNVV), and 497–586 (PTKV…DKLS). Cystine bridges form between cysteine 50/cysteine 100, cysteine 144/cysteine 194, cysteine 247/cysteine 295, cysteine 337/cysteine 384, cysteine 429/cysteine 477, and cysteine 519/cysteine 576. 3 N-linked (GlcNAc...) asparagine glycosylation sites follow: asparagine 65, asparagine 90, and asparagine 191. Residues asparagine 370, asparagine 375, and asparagine 466 are each glycosylated (N-linked (GlcNAc...) asparagine). 4 consecutive Fibronectin type-III domains span residues 599-697 (PPEA…TEEA), 702-799 (TPAN…SAEE), 804-899 (PPAS…TRKP), and 900-995 (PPSQ…ISNS). The interval 685–710 (PSRPSEKRRTEEALPEVTPANVSGGG) is disordered. Residues 687-696 (RPSEKRRTEE) are compositionally biased toward basic and acidic residues. 7 N-linked (GlcNAc...) asparagine glycosylation sites follow: asparagine 705, asparagine 764, asparagine 858, asparagine 893, asparagine 911, asparagine 929, and asparagine 954. Residue serine 1000 is the site of GPI-anchor amidated serine attachment. Positions 1001–1026 (GASTSNACTLSAISTIMISLTARSSL) are cleaved as a propeptide — removed in mature form.

This sequence belongs to the immunoglobulin superfamily. Contactin family. Interacts with PTPRG. Specifically expressed in the nervous system. Not expressed in heart, spleen, lung, liver, kidney or skeletal muscle. In the hippocampus, it is highly expressed in CA1 pyramidal cells and weakly expressed in other regions of the hippocampus.

The protein localises to the cell membrane. Its subcellular location is the secreted. Contactins mediate cell surface interactions during nervous system development. Has some neurite outgrowth-promoting activity. May be involved in synaptogenesis. The protein is Contactin-4 (Cntn4) of Rattus norvegicus (Rat).